We begin with the raw amino-acid sequence, 267 residues long: Putative carbamate hydrolase RutD (267 aa).

The AB hydrolase-1 domain maps to 23–139 (VVLLSSGLGG…IQRCFDTRIH (117 aa)).

The protein belongs to the AB hydrolase superfamily. Hydrolase RutD family.

The enzyme catalyses carbamate + 2 H(+) = NH4(+) + CO2. Its function is as follows. Involved in pyrimidine catabolism. May facilitate the hydrolysis of carbamate, a reaction that can also occur spontaneously. In Caulobacter segnis (strain ATCC 21756 / DSM 7131 / JCM 7823 / NBRC 15250 / LMG 17158 / TK0059) (Mycoplana segnis), this protein is Putative carbamate hydrolase RutD.